The chain runs to 336 residues: Adenosine deaminase (336 aa).

Positions 15 and 17 each coordinate Zn(2+). Positions 17, 19, and 172 each coordinate substrate. Zn(2+) is bound at residue histidine 199. The active-site Proton donor is glutamate 202. Aspartate 279 is a binding site for Zn(2+).

Belongs to the metallo-dependent hydrolases superfamily. Adenosine and AMP deaminases family. Adenosine deaminase subfamily. Zn(2+) serves as cofactor.

The enzyme catalyses adenosine + H2O + H(+) = inosine + NH4(+). The catalysed reaction is 2'-deoxyadenosine + H2O + H(+) = 2'-deoxyinosine + NH4(+). In terms of biological role, catalyzes the hydrolytic deamination of adenosine and 2-deoxyadenosine. The chain is Adenosine deaminase from Streptococcus thermophilus (strain ATCC BAA-491 / LMD-9).